The chain runs to 246 residues: Polyhedrin (246 aa).

Belongs to the polyhedrin family.

Functionally, major component of the virus occlusion bodies, which are large proteinaceous structures (polyhedra), that protect the virus from the outside environment for extended periods until they are ingested by insect larvae. The sequence is that of Polyhedrin (PH) from Lepidoptera (butterflies and moths).